Here is a 188-residue protein sequence, read N- to C-terminus: Protein GrpE 2 (188 aa).

Residues 1–29 (MDNQEKKTNYQNTDKENDLEKNKEKKNDE) show a composition bias toward basic and acidic residues. A disordered region spans residues 1 to 33 (MDNQEKKTNYQNTDKENDLEKNKEKKNDESIFQ).

Belongs to the GrpE family. As to quaternary structure, homodimer.

It is found in the cytoplasm. Participates actively in the response to hyperosmotic and heat shock by preventing the aggregation of stress-denatured proteins, in association with DnaK and GrpE. It is the nucleotide exchange factor for DnaK and may function as a thermosensor. Unfolded proteins bind initially to DnaJ; upon interaction with the DnaJ-bound protein, DnaK hydrolyzes its bound ATP, resulting in the formation of a stable complex. GrpE releases ADP from DnaK; ATP binding to DnaK triggers the release of the substrate protein, thus completing the reaction cycle. Several rounds of ATP-dependent interactions between DnaJ, DnaK and GrpE are required for fully efficient folding. This is Protein GrpE 2 from Buchnera aphidicola subsp. Schizaphis graminum (strain Sg).